The chain runs to 295 residues: Shikimate dehydrogenase (NADP(+)) (295 aa).

Shikimate-binding positions include 24 to 26 and threonine 71; that span reads SRS. Catalysis depends on lysine 75, which acts as the Proton acceptor. An NADP(+)-binding site is contributed by glutamate 87. Shikimate contacts are provided by asparagine 96 and aspartate 111. NADP(+)-binding positions include 136-140, 160-165, and methionine 233; these read GAGGA and NRTASR. Position 235 (tyrosine 235) interacts with shikimate. NADP(+) is bound at residue glycine 256.

This sequence belongs to the shikimate dehydrogenase family. In terms of assembly, homodimer.

It carries out the reaction shikimate + NADP(+) = 3-dehydroshikimate + NADPH + H(+). Its pathway is metabolic intermediate biosynthesis; chorismate biosynthesis; chorismate from D-erythrose 4-phosphate and phosphoenolpyruvate: step 4/7. Involved in the biosynthesis of the chorismate, which leads to the biosynthesis of aromatic amino acids. Catalyzes the reversible NADPH linked reduction of 3-dehydroshikimate (DHSA) to yield shikimate (SA). This chain is Shikimate dehydrogenase (NADP(+)), found in Cupriavidus necator (strain ATCC 17699 / DSM 428 / KCTC 22496 / NCIMB 10442 / H16 / Stanier 337) (Ralstonia eutropha).